Here is a 79-residue protein sequence, read N- to C-terminus: U-actitoxin-Avd9d (79 aa).

The signal sequence occupies residues 1–19; it reads NLKVLAVFVLCAILVVVTA. The propeptide occupies 20–37; the sequence is ERRGTETGGYKKDTLEDL. Residues 44-79 enclose the ShKT domain; the sequence is CFDSFKEATCHMAKTNRLCKTSAKYQINCKKTCGLC. 3 disulfides stabilise this stretch: C44–C79, C53–C72, and C62–C76. The interval 67–68 is crucial for binding to potassium channels; it reads KY.

It belongs to the sea anemone type 1 potassium channel toxin family. Type 1b subfamily.

It is found in the secreted. The protein resides in the nematocyst. Its function is as follows. Inhibits voltage-gated potassium channels (Kv1/KCNA). This chain is U-actitoxin-Avd9d, found in Anemonia viridis (Snakelocks anemone).